Reading from the N-terminus, the 202-residue chain is Thymidine kinase (202 aa).

ATP contacts are provided by residues 16-23 (GPMFSGKS) and 99-102 (DEVQ). The active-site Proton acceptor is Glu100. The Zn(2+) site is built by Cys156, Cys159, Cys194, and His197.

It belongs to the thymidine kinase family. Homotetramer.

The protein resides in the cytoplasm. The catalysed reaction is thymidine + ATP = dTMP + ADP + H(+). This is Thymidine kinase from Deinococcus deserti (strain DSM 17065 / CIP 109153 / LMG 22923 / VCD115).